A 193-amino-acid polypeptide reads, in one-letter code: Xanthine phosphoribosyltransferase (193 aa).

Xanthine contacts are provided by Leu20 and Asn27. 128-132 (ANGDA) lines the 5-phospho-alpha-D-ribose 1-diphosphate pocket. Xanthine is bound at residue Lys156.

Belongs to the purine/pyrimidine phosphoribosyltransferase family. Xpt subfamily. Homodimer.

The protein resides in the cytoplasm. It catalyses the reaction XMP + diphosphate = xanthine + 5-phospho-alpha-D-ribose 1-diphosphate. It functions in the pathway purine metabolism; XMP biosynthesis via salvage pathway; XMP from xanthine: step 1/1. Its function is as follows. Converts the preformed base xanthine, a product of nucleic acid breakdown, to xanthosine 5'-monophosphate (XMP), so it can be reused for RNA or DNA synthesis. This Staphylococcus haemolyticus (strain JCSC1435) protein is Xanthine phosphoribosyltransferase.